The primary structure comprises 409 residues: Pentatricopeptide repeat-containing protein At1g01970 (409 aa).

PPR repeat units lie at residues Asn-164 to Ile-198, Asp-199 to Leu-233, Asp-234 to Ala-268, Gly-269 to Pro-303, Asp-304 to Ala-338, and Thr-339 to Leu-373.

It belongs to the PPR family. P subfamily.

The protein is Pentatricopeptide repeat-containing protein At1g01970 of Arabidopsis thaliana (Mouse-ear cress).